Consider the following 955-residue polypeptide: Probable trehalose monomycolate exporter MmpL3 (955 aa).

The Cytoplasmic portion of the chain corresponds to 1 to 13 (MFAWWGRTVYRYR). Residues 14–34 (FIVIGITVALCLCGGVFGLSL) form a helical membrane-spanning segment. Topologically, residues 35 to 190 (GKHVTQSGFY…TIATDQRRME (156 aa)) are periplasmic. 40–44 (QSGFY) serves as a coordination point for a 1,2-diacylglycero-3-phosphoethanolamine. A helical transmembrane segment spans residues 191 to 213 (VLALPLVAVVLFLVFGGVIAACL). The Cytoplasmic segment spans residues 214 to 219 (PVMVGG). A helical membrane pass occupies residues 220–236 (LSIAGALGILRFIALFG). Residues 237-244 (PVHFFAQP) are Periplasmic-facing. Residues 245 to 262 (VVSLIGLGIAVDYGLFVV) traverse the membrane as a helical segment. The Cytoplasmic portion of the chain corresponds to 263-291 (SRFREEIAEGYDTEAAVRRTVMTAGRTVT). Residues 292–312 (FSAVLIAASGASLLLLPQGFV) traverse the membrane as a helical segment. The Periplasmic portion of the chain corresponds to 313-319 (KSLTYAL). Residues 320 to 340 (IAAVTLAALLSITLLPACLAI) form a helical membrane-spanning segment. Topologically, residues 341–401 (LAKHVDALGV…KLVNFVMKRP (61 aa)) are cytoplasmic. Residues 402-422 (LVFAIPIVIGMILLVIPLGNL) form a helical membrane-spanning segment. Over 423-567 (SFGGMSEKYL…HSLVAQAPLM (145 aa)) the chain is Periplasmic. The chain crosses the membrane as a helical span at residues 568–588 (VIMLITTTMLLMFLAFGSFVL). Residues 589–591 (PIK) are Cytoplasmic-facing. Residues 592–612 (AAVMSALTLGSTMGILTWIFV) form a helical membrane-spanning segment. The Periplasmic portion of the chain corresponds to 613 to 621 (DGHLSKWLN). A helical transmembrane segment spans residues 622-642 (FTPTPLMVVIIALVVAVGYGL). Residues 643–678 (ATDYEVFLVSRMVEARAESMSTQEAVRIGTASTGRL) are Cytoplasmic-facing. Residues 679-699 (ITAAALVLAVVAGSFVFSDLV) traverse the membrane as a helical segment. Residues 700-703 (MMKY) lie on the Periplasmic side of the membrane. Residues 704 to 724 (LAFGLMAALLLDATVVRMFLV) form a helical membrane-spanning segment. The Cytoplasmic portion of the chain corresponds to 725-955 (PSVMKLLGDD…QDLLRREGRL (231 aa)). Positions 759–955 (ERRRPTVSGR…QDLLRREGRL (197 aa)) are disordered. Polar residues-rich tracts occupy residues 821-860 (GAST…SQGV) and 890-902 (NRSS…TAEP).

The protein belongs to the resistance-nodulation-cell division (RND) (TC 2.A.6) family. MmpL subfamily.

The protein resides in the cell inner membrane. It is found in the cell septum. Its subcellular location is the cell tip. Its function is as follows. Transports trehalose monomycolate (TMM) to the cell wall. Flips TMM across the inner membrane. Membrane potential is not required for this function. Transports probably phosphatidylethanolamine (PE) as well. Contributes to membrane potential, cell wall composition, antibiotic susceptibility and fitness. This chain is Probable trehalose monomycolate exporter MmpL3 (mmpL3), found in Mycobacterium leprae (strain TN).